The primary structure comprises 425 residues: MGSLSSPTSLTPYQVLSKYKKFPSPDEEFWWDHAASTLADLIKWTKATPAQEYEFLQFFYEHVIPNFSWYRPYDVPGRAWNTGITPSGLPLEYSVNWRNIDANAMVRVGVEPISQFAGTARDPYSHYKIWDTLNQLSQVKALKSFDLELWRHFSSALCTSREEEALLDQTRTLPESFSIAKMQHSMGFDFCDDEVIVKIYLIPNMKARASGTPLAELLTGSIHAIYRDTIDRETLATVINYLDSSSNFNDATWFSFDCIPRSQSRIKLYGSDFRTTWSRAEDLWTVGGRYTDAVTMKGLAYLKELWDLLPIQDFETLPEQAVQNPPMLWAYEIRPGDKTPSPRIYIPGHCLNDKKVADGLSTFFKRVGWSDLGDQYTDRLFSMFPKQDLKDSTALHTWIAFSYTEKSGVYMNCYYLASASFPFKL.

L-tryptophan-binding positions include Gly83–Ile84 and Glu92. Residues Arg107, Lys198, Tyr200, Arg265, Lys267, Tyr269, Tyr345, Tyr410, and Tyr414 each contribute to the substrate site.

It belongs to the tryptophan dimethylallyltransferase family. As to quaternary structure, homodimer.

It participates in secondary metabolite biosynthesis. Functionally, aromatic prenyl transferase; part of the gene cluster that mediates the biosynthesis of the indole diterpenes penitrems. The geranylgeranyl diphosphate (GGPP) synthase penG catalyzes the first step in penitrem biosynthesis via conversion of farnesyl pyrophosphate and isopentyl pyrophosphate into geranylgeranyl pyrophosphate (GGPP). Condensation of indole-3-glycerol phosphate with GGPP by the prenyl transferase penC then forms 3-geranylgeranylindole (3-GGI). Epoxidation by the FAD-dependent monooxygenase penM leads to a epoxidized-GGI that is substrate of the terpene cyclase penB for cyclization to yield paspaline. Paspaline is subsequently converted to 13-desoxypaxilline by the cytochrome P450 monooxygenase penP, the latter being then converted to paxilline by the cytochrome P450 monooxygenase penQ. Paxilline is converted to beta-paxitriol via C-10 ketoreduction by the short-chain dehydrogenase PC-15 which can be monoprenylated at the C-20 by the indole diterpene prenyltransferase penD. A two-step elimination (acetylation and elimination) process performed by the O-acetyltransferase PC-16 and the P.simplicissimum ptmI-ortholog not yet identified in P.crustosum, leads to the production of the prenylated form of penijanthine. The FAD-linked oxidoreductase ptmO then converts the prenylated form of penijanthine into PC-M5 which is in turn transformed into PC-M4 by the aromatic dimethylallyltransferase PC-22. A series of oxidation steps involving 4 cytochrome P450 monooxygenases (PC-21, PC-05, PC-23, PC-20) and a FAD-dependent monooxygenase (PC-14) are required for the transformation of PC-M4 to penitrems A and E. Synthesis of these final products is proposed to proceed via penitrems D and C (PC-21, PC-05, PC-14) and penitrems B and F (PC-21, PC-05, PC-14, PC-23). The sequence is that of Aromatic prenyl transferase PC-22 from Penicillium crustosum (Blue mold fungus).